A 93-amino-acid chain; its full sequence is Co-chaperonin GroES (93 aa).

Belongs to the GroES chaperonin family. As to quaternary structure, heptamer of 7 subunits arranged in a ring. Interacts with the chaperonin GroEL.

Its subcellular location is the cytoplasm. Together with the chaperonin GroEL, plays an essential role in assisting protein folding. The GroEL-GroES system forms a nano-cage that allows encapsulation of the non-native substrate proteins and provides a physical environment optimized to promote and accelerate protein folding. GroES binds to the apical surface of the GroEL ring, thereby capping the opening of the GroEL channel. This chain is Co-chaperonin GroES, found in Streptococcus intermedius.